Here is a 780-residue protein sequence, read N- to C-terminus: Pendrin (780 aa).

At 1–87 the chain is on the cytoplasmic side; that stretch reads MAARGGRSEP…YRVKEWLLSD (87 aa). A helical membrane pass occupies residues 88 to 108; sequence IISGVSTGLVGTLQGMAYALL. Residue Ala-109 is a topological domain, extracellular. A helical membrane pass occupies residues 110-130; that stretch reads AVPVQFGLYSAFFPILTYFVF. Over 131–135 the chain is Cytoplasmic; sequence GTSRH. A helical transmembrane segment spans residues 136–156; it reads ISVGPFPVVSLMVGSVVLSMA. The Extracellular portion of the chain corresponds to 157–191; that stretch reads PDDHFLVPSGNGSALNSTTLDTGTRDAARVLLAST. Residues 192–212 traverse the membrane as a helical segment; the sequence is LTLLVGIIQLVFGGLQIGFIV. The Cytoplasmic segment spans residues 213–218; the sequence is RYLADP. The helical transmembrane segment at 219-239 threads the bilayer; it reads LVGGFTTAAAFQVLVSQLKIV. Residues 240–263 lie on the Extracellular side of the membrane; it reads LNVSTKNYNGILSIIYTLIEIFQN. A helical membrane pass occupies residues 264 to 284; that stretch reads IGDTNIADFIAGLLTIIVCMA. Residues 285–295 are Cytoplasmic-facing; sequence VKELNDRFKHR. A helical membrane pass occupies residues 296–316; it reads IPVPIPIEVIVTIIATAISYG. The Extracellular portion of the chain corresponds to 317 to 344; that stretch reads ANLEKNYNAGIVKSIPSGFLPPVLPSVG. A helical transmembrane segment spans residues 345-365; it reads LFSDMLAASFSIAVVAYAIAV. Residues 366–384 are Cytoplasmic-facing; it reads SVGKVYATKHDYVIDGNQE. The helical transmembrane segment at 385–405 threads the bilayer; that stretch reads FIAFGISNVFSGFFSCFVATT. Residues 406-421 are Extracellular-facing; the sequence is ALSRTAVQESTGGKTQ. A helical membrane pass occupies residues 422 to 442; that stretch reads VAGLISAVIVMVAIVALGRLL. At 443 to 448 the chain is on the cytoplasmic side; sequence EPLQKS. The helical transmembrane segment at 449–469 threads the bilayer; it reads VLAAVVIANLKGMFMQVCDVP. Residues 470-486 lie on the Extracellular side of the membrane; sequence RLWKQNKTDAVIWVFTC. Residues 487–507 form a helical membrane-spanning segment; sequence IMSIILGLDLGLLAGLLFALL. Residues 508-780 lie on the Cytoplasmic side of the membrane; that stretch reads TVVLRVQFPS…QDEAMRRLAS (273 aa). An STAS domain is found at 535–729; that stretch reads HYKNLEEPEG…LTVHDAILHL (195 aa).

Belongs to the SLC26A/SulP transporter (TC 2.A.53) family. Interacts with IQGAP1. This interaction enhances the chloride-bicarbonate exchange activity of SLC26A4. As to expression, highly expressed in the kidney (at protein level). Throughout the endolymphatic duct and sac, in distinct areas of the utricle and saccule, and in the external sulcus region within the cochlea. Expressed in the parotid gland.

Its subcellular location is the apical cell membrane. It localises to the cell membrane. It catalyses the reaction chloride(in) = chloride(out). It carries out the reaction iodide(out) = iodide(in). The catalysed reaction is hydrogencarbonate(in) + chloride(out) = hydrogencarbonate(out) + chloride(in). The enzyme catalyses iodide(in) + hydrogencarbonate(out) = iodide(out) + hydrogencarbonate(in). It catalyses the reaction iodide(in) + chloride(out) = iodide(out) + chloride(in). It carries out the reaction formate(in) + chloride(out) = formate(out) + chloride(in). Its function is as follows. Sodium-independent transporter of chloride and iodide. Mediates electroneutral iodide-chloride, iodide-bicarbonate and chloride-bicarbonate exchange with 1:1 stoichiometry. Mediates elctroneutral chloride-formate exchange. The polypeptide is Pendrin (Slc26a4) (Mus musculus (Mouse)).